The chain runs to 82 residues: Probable tautomerase XF_1725 (82 aa).

The active-site Proton acceptor; via imino nitrogen is P2.

It belongs to the 4-oxalocrotonate tautomerase family.

The sequence is that of Probable tautomerase XF_1725 from Xylella fastidiosa (strain 9a5c).